We begin with the raw amino-acid sequence, 254 residues long: MRTYSKTELFCLLDMVIELFKKEKTLAEISPPVTIVGDIHGQFEDLVRLLNTRNSSENAKSKPIYGFSTKKWVFLGDYVDRGYKSLDCICLVFSLKICFPKQYILLRGNHETRAINFRYGFRVCSVVVLKIPAKPSFIRNNKRGLSVCFNEAAVNETCRLLNISLIVRGHQMMPAGFKFFADRKLCTIFSAPRYMNEIDNSGAVMKVASNGKISISIMKNPNFAMKMFLLQMKSHNSLDHRNMRLSKNSNNLPS.

This is an uncharacterized protein from Caenorhabditis elegans.